The following is a 677-amino-acid chain: Heat shock transcription factor (677 aa).

Disordered regions lie at residues Met1 to Asn56 and Ser115 to Pro164. 2 stretches are compositionally biased toward polar residues: residues Ser115–Thr131 and Gln143–Pro164. A DNA-binding region spans residues Ala193–Gln297. The interval Glu320–Val373 is involved in trimerization. Composition is skewed to low complexity over residues Asn400–Asn416 and Arg457–Gln501. Disordered stretches follow at residues Asn400 to Gln444, Arg457 to Ser541, and Lys606 to Ala677. The segment at Asn466–Ala677 is activatory. Polar residues-rich tracts occupy residues Phe502–Ser541 and Phe629–Pro641. Residues Glu650–Asn669 are compositionally biased toward basic and acidic residues.

Belongs to the HSF family. In terms of assembly, homotrimer. Homotrimerization increases the affinity of HSF1 to DNA. Exhibits temperature-dependent phosphorylation.

The protein resides in the nucleus. In terms of biological role, DNA-binding transcription factor that specifically binds heat shock promoter elements (HSE) and activates transcription. In Kluyveromyces lactis (strain ATCC 8585 / CBS 2359 / DSM 70799 / NBRC 1267 / NRRL Y-1140 / WM37) (Yeast), this protein is Heat shock transcription factor.